The following is a 479-amino-acid chain: Sodium-coupled neutral amino acid transporter 5 (479 aa).

Topologically, residues 1 to 58 (MAISCAVGMEMQEPKMNGTLSTGAAAGYRQEREGFLPTTHGPAPGRKPVQFLDFEGKT) are cytoplasmic. Residues 59–81 (SFGMSVFNLSNAIMGSGILGLAY) traverse the membrane as a helical segment. Residues 82-97 (AMAHTGVIFFLALLLC) lie on the Extracellular side of the membrane. A helical membrane pass occupies residues 98–118 (IALLSSYSIHLLLTCASVVGI). Residues 119–135 (RAYEQLGQRAFGPAGKV) lie on the Cytoplasmic side of the membrane. The helical transmembrane segment at 136–156 (VVAIIICLHNVGAMSSYLFII) threads the bilayer. Residues 157–176 (KSELPLVIGTFLHMDPEGDW) are Extracellular-facing. A helical membrane pass occupies residues 177 to 197 (FLKGNLLIILVSLLIILPLAL). Over 198–202 (MKHLG) the chain is Cytoplasmic. Residues 203–223 (YLGYTSSLSLTCMLFFLISVI) traverse the membrane as a helical segment. Residues 224 to 264 (YKKFQLGCVVSHNDTVVESEPAPLQAFNSSCEAKLFTVDSQ) are Extracellular-facing. Cysteines 231 and 254 form a disulfide. Asn236 carries N-linked (GlcNAc...) asparagine glycosylation. Residues 265–285 (MSYTVPIMAFAFVCHPEVLPI) traverse the membrane as a helical segment. Over 286 to 302 (YTELCCPTQRRMQAVAN) the chain is Cytoplasmic. A helical membrane pass occupies residues 303 to 323 (MSIGAMFIMYGLTATFGYLTF). Residues 324–341 (YSTVKAEMLEMYTQEDLL) lie on the Extracellular side of the membrane. The chain crosses the membrane as a helical span at residues 342 to 362 (ILCVRLAVLLAVTLTVPVVLF). The Cytoplasmic portion of the chain corresponds to 363 to 383 (PIRRALQQLLFPSKAFSWPRH). Residues 384–404 (VAIALILLILVNILVICVPTI) form a helical membrane-spanning segment. At 405-406 (RD) the chain is on the extracellular side. A helical membrane pass occupies residues 407–427 (IFGFIGSTSAPSLIFILPSVF). Residues 428 to 446 (YLRIVPADMEPLFSWPKIQ) lie on the Cytoplasmic side of the membrane. The helical transmembrane segment at 447–467 (ALCFGVLGVLFMAISLGFMFA) threads the bilayer. Residues 468–479 (NWATGQSRMSGH) lie on the Extracellular side of the membrane.

It belongs to the amino acid/polyamine transporter 2 family. In terms of tissue distribution, highly expressed in neocortex, hippocampus, striatum and spinal cord by astrocytes (at protein level). Expressed in brain, lung, stomach, kidney, spleen and testis. Expressed in the cerebral cortex between the second and third postnatal week, where expressed exclusively in glial cells from postnatal day 14 to adulthood (at protein level). Expressed in the cerebellum at post natal day 12 (P12). Expressed in liver. Expressed inside the cell body of the astrocytes.

The protein localises to the cell membrane. It carries out the reaction L-serine(out) + Na(+)(out) + H(+)(in) = L-serine(in) + Na(+)(in) + H(+)(out). It catalyses the reaction L-alanine(out) + Na(+)(out) + H(+)(in) = L-alanine(in) + Na(+)(in) + H(+)(out). The catalysed reaction is glycine(out) + Na(+)(out) + H(+)(in) = glycine(in) + Na(+)(in) + H(+)(out). The enzyme catalyses L-glutamine(out) + Na(+)(out) + H(+)(in) = L-glutamine(in) + Na(+)(in) + H(+)(out). It carries out the reaction L-asparagine(out) + Na(+)(out) + H(+)(in) = L-asparagine(in) + Na(+)(in) + H(+)(out). It catalyses the reaction L-histidine(out) + Na(+)(out) + H(+)(in) = L-histidine(in) + Na(+)(in) + H(+)(out). The catalysed reaction is L-cysteine(out) + Na(+)(out) + H(+)(in) = L-cysteine(in) + Na(+)(in) + H(+)(out). With respect to regulation, not inhibited by lithium. Partial allosteric regulation on ions sodium binding. Its function is as follows. Symporter that cotransports neutral amino acids and sodium ions, coupled to an H(+) antiporter activity. Releases L-glutamine and glycine from astroglial cells and may participate in the glutamate/GABA-glutamine cycle and the NMDA receptors activation. In addition contributes significantly to L-glutamine uptake in retina, namely in ganglion and Mueller cells and, therefore participates in the retinal glutamate-glutamine cycle. The transport activity is pH sensitive, Li(+) tolerant, bidirectional and associated with large uncoupled fluxes of protons. The transport is electroneutral coupled to the cotransport of 1 Na(+) and the antiport of 1 H(+). May have particular importance for modulation of net hepatic glutamine flux. This chain is Sodium-coupled neutral amino acid transporter 5, found in Rattus norvegicus (Rat).